Here is a 1018-residue protein sequence, read N- to C-terminus: Thrombospondin type-1 domain-containing protein 4 (1018 aa).

The signal sequence occupies residues M1–P25. The TSP type-1 1 domain occupies P53 to P307. Disordered regions lie at residues S111–L235, P254–S279, and S534–Q623. Over residues Q187–R200 the composition is skewed to basic residues. A compositionally biased stretch (low complexity) spans S201–G210. Residues L259–S279 are compositionally biased toward polar residues. Basic and acidic residues-rich tracts occupy residues R556–A577 and R592–D603. 5 TSP type-1 domains span residues C676 to S737, W739 to P792, C793 to T851, G852 to P911, and C912 to V968. The PLAC domain maps to V971–A1008.

In terms of assembly, interacts with FBN1. May interact with TGFB1.

The protein localises to the secreted. The protein resides in the extracellular space. Its subcellular location is the extracellular matrix. In terms of biological role, promotes FBN1 matrix assembly. Attenuates TGFB signaling, possibly by accelerating the sequestration of large latent complexes of TGFB or active TGFB by FBN1 microfibril assembly, thereby negatively regulating the expression of TGFB regulatory targets, such as POSTN. The protein is Thrombospondin type-1 domain-containing protein 4 (THSD4) of Homo sapiens (Human).